The chain runs to 367 residues: Cellular tumor antigen p53 (367 aa).

Positions 1-47 (MEEENISLPLSQDTFQDLWDNVSAPPISTIQTAALENEAWPAERQMN) are transcription activation (acidic). The DNA-binding element occupies 86 to 273 (DYPGEYGFKL…KTEETNSTKM (188 aa)). Zn(2+)-binding residues include C160, H163, C219, and C223. Residues 254 to 261 (RVCACPGR) form an interaction with DNA region. Residues 262–279 (DRKTEETNSTKMQNDAKD) are compositionally biased toward basic and acidic residues. Disordered stretches follow at residues 262 to 306 (DRKT…AEED) and 332 to 367 (DLLE…SDSD). A Bipartite nuclear localization signal motif is present at residues 282–300 (KRKSVPTPDSTTIKKSKTA). Positions 291–302 (STTIKKSKTASS) are enriched in low complexity. Residues 308 to 337 (NEVYTLQIRGRKRYEMLKKINDGLDLLENK) are oligomerization. Positions 322–333 (EMLKKINDGLDL) match the Nuclear export signal motif. Positions 342–363 (ATHRPDGPIPPSGKRLLHRGEK) are basic (repression of DNA-binding).

It belongs to the p53 family. In terms of assembly, binds DNA as a homotetramer. It depends on Zn(2+) as a cofactor.

It localises to the cytoplasm. The protein localises to the nucleus. In terms of biological role, multifunctional transcription factor that induces cell cycle arrest, DNA repair or apoptosis upon binding to its target DNA sequence. Acts as a tumor suppressor in many tumor types; induces growth arrest or apoptosis depending on the physiological circumstances and cell type. Negatively regulates cell division by controlling expression of a set of genes required for this process. One of the activated genes is an inhibitor of cyclin-dependent kinases. Apoptosis induction seems to be mediated either by stimulation of BAX and FAS antigen expression, or by repression of Bcl-2 expression. The chain is Cellular tumor antigen p53 (tp53) from Tetraodon miurus (Congo puffer).